Reading from the N-terminus, the 960-residue chain is Dynamin-like GTPase OPA1, mitochondrial (960 aa).

A mitochondrion-targeting transit peptide spans 1–87 (MWRAGRAAVA…IKYGYQPRRN (87 aa)). Over 88 to 96 (FWPARLAAR) the chain is Mitochondrial matrix. Residues 97–113 (LLKLRYIILGSAVGGGY) form a helical membrane-spanning segment. Residues 114–770 (TAKKTFDEWK…NAIENMIGPD (657 aa)) are Mitochondrial intermembrane-facing. A coiled-coil region spans residues 210–254 (SDKEKIDQLQEELLHTQLKYQRILERLEKENKELRKLVLQKDDKG). Residues 217–222 (QLQEEL) carry the LQQQIQ motif motif. Position 228 is an N6-acetyllysine (lysine 228). The 277-residue stretch at 285-561 (QDHLPRVVVV…FWKMVRESVE (277 aa)) folds into the Dynamin-type G domain. Residues 295 to 302 (GDQSAGKT) are G1 motif. GTP-binding residues include serine 298, glycine 300, lysine 301, threonine 302, serine 303, and glycine 317. Residue threonine 302 participates in Mg(2+) binding. Positions 321–324 (MMTR) are G2 motif. Threonine 323 and aspartate 398 together coordinate Mg(2+). The interval 398–401 (DLPG) is G3 motif. Residues 467-470 (TKVD) form a G4 motif region. 3 residues coordinate GTP: lysine 468, aspartate 470, and threonine 503. Positions 501–504 (VVTG) are G5 motif. Stalk region stretches follow at residues 589–836 (DRNE…IKDT) and 874–928 (CNDV…VKLL). Residues 736–856 (SDKQQWDAAI…KTALNHCNLC (121 aa)) form a paddle region region. The stretch at 771–781 (WKKRWMYWKNR) is an intramembrane region. The Mitochondrial intermembrane portion of the chain corresponds to 782–960 (TQEQCVHNET…AFIEALHQEK (179 aa)). The cysteines at positions 856 and 874 are disulfide-linked. Residues 895–960 (RQQLTNTEVR…AFIEALHQEK (66 aa)) adopt a coiled-coil conformation.

This sequence belongs to the TRAFAC class dynamin-like GTPase superfamily. Dynamin/Fzo/YdjA family. In terms of assembly, oligomeric complex consisting of membrane-bound and soluble forms of OPA1. Interacts with RCC1L; RCC1L acts as a guanine nucleotide exchange factor (GEF) for OPA1 by exchanging bound GDP for free GTP. Interacts with CHCHD3 and IMMT; these interactions occur preferentially with soluble OPA1 forms. Interacts with PRELID1. Post-translationally, cleaved by OMA1 or YME1L downstream of the transmembrane region in response to different signals to generate soluble forms. Cleaved by OMA1 at position S1 following stress conditions, generating the short soluble form (Dynamin-like GTPase OPA1, short form; S-OPA1). AFG3L2 is involved in the regulation of OMA1-dependent processing of OPA1. PARL-dependent proteolytic processing releases an antiapoptotic soluble form not required for mitochondrial fusion. Cleavage at position S2 by YME1L is required to mediate oxidative phosphorylation (OXPHOS)-induced mitochondrial fusion. Cleavage occurs in the sequence motif Leu-Gln-Gln-Gln-Ile-Gln (LQQQIQ). In terms of processing, cleavage at position S3 by YME1L is required for membrane tubulation. As to expression, detected in brain (at protein level). Detected in brain, brain stem, heart, kidney, liver and skeletal muscle.

Its subcellular location is the mitochondrion inner membrane. It is found in the mitochondrion intermembrane space. The enzyme catalyses GTP + H2O = GDP + phosphate + H(+). Activated by guanine nucleotide exchange factor RCC1L. Its function is as follows. Dynamin-related GTPase that is essential for normal mitochondrial morphology by mediating fusion of the mitochondrial inner membranes, regulating cristae morphology and maintaining respiratory chain function. Exists in two forms: the transmembrane, long form (Dynamin-like GTPase OPA1, long form; L-OPA1), which is tethered to the inner mitochondrial membrane, and the short soluble form (Dynamin-like GTPase OPA1, short form; S-OPA1), which results from proteolytic cleavage and localizes in the intermembrane space. Both forms (L-OPA1 and S-OPA1) cooperate to catalyze the fusion of the mitochondrial inner membrane. The equilibrium between L-OPA1 and S-OPA1 is essential: excess levels of S-OPA1, produced by cleavage by OMA1 following loss of mitochondrial membrane potential, lead to an impaired equilibrium between L-OPA1 and S-OPA1, inhibiting mitochondrial fusion. The balance between L-OPA1 and S-OPA1 also influences cristae shape and morphology. Involved in remodeling cristae and the release of cytochrome c during apoptosis. Proteolytic processing by PARL in response to intrinsic apoptotic signals may lead to disassembly of OPA1 oligomers and release of the caspase activator cytochrome C (CYCS) into the mitochondrial intermembrane space. Acts as a regulator of T-helper Th17 cells, which are characterized by cells with fused mitochondria with tight cristae, by mediating mitochondrial membrane remodeling: OPA1 is required for interleukin-17 (IL-17) production. Its role in mitochondrial morphology is required for mitochondrial genome maintenance. Functionally, constitutes the transmembrane long form (L-OPA1) that plays a central role in mitochondrial inner membrane fusion and cristae morphology. L-OPA1 and the soluble short form (S-OPA1) form higher-order helical assemblies that coordinate the fusion of mitochondrial inner membranes. Inner membrane-anchored L-OPA1 molecules initiate membrane remodeling by recruiting soluble S-OPA1 to rapidly polymerize into a flexible cylindrical scaffold encaging the mitochondrial inner membrane. Once at the membrane surface, the formation of S-OPA1 helices induce bilayer curvature. OPA1 dimerization through the paddle region, which inserts into cardiolipin-containing membrane, promotes GTP hydrolysis and the helical assembly of a flexible OPA1 lattice on the membrane, which drives membrane curvature and mitochondrial fusion. Plays a role in the maintenance and remodeling of mitochondrial cristae, some invaginations of the mitochondrial inner membrane that provide an increase in the surface area. Probably acts by forming helical filaments at the inside of inner membrane tubes with the shape and dimensions of crista junctions. The equilibrium between L-OPA1 and S-OPA1 influences cristae shape and morphology: increased L-OPA1 levels promote cristae stacking and elongated mitochondria, while increased S-OPA1 levels correlated with irregular cristae packing and round mitochondria shape. Constitutes the soluble short form (S-OPA1) generated by cleavage by OMA1, which plays a central role in mitochondrial inner membrane fusion and cristae morphology. The transmembrane long form (L-OPA1) and the S-OPA1 form higher-order helical assemblies that coordinate the fusion of mitochondrial inner membranes. Inner membrane-anchored L-OPA1 molecules initiate membrane remodeling by recruiting soluble S-OPA1 to rapidly polymerize into a flexible cylindrical scaffold encaging the mitochondrial inner membrane. Once at the membrane surface, the formation of S-OPA1 helices induce bilayer curvature. OPA1 dimerization through the paddle region, which inserts into cardiolipin-containing membrane, promotes GTP hydrolysis and the helical assembly of a flexible OPA1 lattice on the membrane, which drives membrane curvature and mitochondrial fusion. Excess levels of S-OPA1 produced by cleavage by OMA1 following stress conditions that induce loss of mitochondrial membrane potential, lead to an impaired equilibrium between L-OPA1 and S-OPA1, thereby inhibiting mitochondrial fusion. Involved in mitochondrial safeguard in response to transient mitochondrial membrane depolarization by mediating flickering: cleavage by OMA1 leads to excess production of S-OPA1, preventing mitochondrial hyperfusion. Plays a role in the maintenance and remodeling of mitochondrial cristae, some invaginations of the mitochondrial inner membrane that provide an increase in the surface area. Probably acts by forming helical filaments at the inside of inner membrane tubes with the shape and dimensions of crista junctions. The equilibrium between L-OPA1 and S-OPA1 influences cristae shape and morphology: increased L-OPA1 levels promote cristae stacking and elongated mitochondria, while increased S-OPA1 levels correlated with irregular cristae packing and round mitochondria shape. In terms of biological role, isoforms that contain the alternative exon 4b are required for mitochondrial genome maintenance, possibly by anchoring the mitochondrial nucleoids to the inner mitochondrial membrane. The chain is Dynamin-like GTPase OPA1, mitochondrial from Mus musculus (Mouse).